We begin with the raw amino-acid sequence, 2242 residues long: Large tegument protein deneddylase (2242 aa).

A deubiquitination activity region spans residues 1 to 238; that stretch reads MKVTQASCHQ…IDLTGVVRES (238 aa). The Peptidase C76 domain maps to 4 to 226; it reads TQASCHQGDI…AARLVSTYRD (223 aa). Catalysis depends on residues Cys-24, Asp-160, and His-162. A disordered region spans residues 239 to 318; sequence ADTAATTTTA…KTLATASSSS (80 aa). The segment covering 240 to 250 has biased composition (low complexity); that stretch reads DTAATTTTAAP. Over residues 251–268 the composition is skewed to pro residues; sequence SLPPLPDPIVDPGCPPGV. Over residues 304 to 318 the composition is skewed to low complexity; sequence PSTTSKTLATASSSS. The tract at residues 328-332 is interaction with inner tegument protein; sequence SSAVP. The span at 1173-1190 shows a compositional bias: polar residues; the sequence is SQQKMEGQLQETRQQMTE. The segment at 1173–1229 is disordered; sequence SQQKMEGQLQETRQQMTETSERLDRSLRQDPGSSSVTRVPEKPFKGQELAGRITPPP. Positions 1191–1200 are enriched in basic and acidic residues; the sequence is TSERLDRSLR.

Belongs to the herpesviridae large tegument protein family. As to quaternary structure, interacts with host CUL1 and CUL4A; these interactions inhibit the E3 ligase activity of cullins. Interacts with inner tegument protein. Interacts with capsid vertex specific component CVC2. Interacts with the major capsid protein/MCP.

Its subcellular location is the virion tegument. The protein resides in the host cytoplasm. The protein localises to the host nucleus. It catalyses the reaction Thiol-dependent hydrolysis of ester, thioester, amide, peptide and isopeptide bonds formed by the C-terminal Gly of ubiquitin (a 76-residue protein attached to proteins as an intracellular targeting signal).. In terms of biological role, large tegument protein that plays multiple roles in the viral cycle. During viral entry, remains associated with the capsid while most of the tegument is detached and participates in the capsid transport toward the host nucleus. Plays a role in the routing of the capsid at the nuclear pore complex and subsequent uncoating. Within the host nucleus, acts as a deneddylase and promotes the degradation of nuclear CRLs (cullin-RING ubiquitin ligases) and thereby stabilizes nuclear CRL substrates, while cytoplasmic CRLs remain unaffected. These modifications prevent host cell cycle S-phase progression and create a favorable environment allowing efficient viral genome replication. Participates later in the secondary envelopment of capsids. Indeed, plays a linker role for the association of the outer viral tegument to the capsids together with the inner tegument protein. This chain is Large tegument protein deneddylase, found in Homo sapiens (Human).